The sequence spans 51 residues: Lysis protein for colicin A (51 aa).

The N-terminal stretch at methionine 1–alanine 18 is a signal peptide. Cysteine 19 carries the N-palmitoyl cysteine lipid modification. The S-diacylglycerol cysteine moiety is linked to residue cysteine 19. The interval threonine 27 to proline 51 is disordered.

Its subcellular location is the cell outer membrane. Functionally, lysis proteins are required for both colicin release and partial cell lysis. This chain is Lysis protein for colicin A (cal), found in Citrobacter freundii.